The primary structure comprises 283 residues: ATP phosphoribosyltransferase (283 aa).

This sequence belongs to the ATP phosphoribosyltransferase family. Long subfamily. Mg(2+) serves as cofactor.

Its subcellular location is the cytoplasm. The catalysed reaction is 1-(5-phospho-beta-D-ribosyl)-ATP + diphosphate = 5-phospho-alpha-D-ribose 1-diphosphate + ATP. It participates in amino-acid biosynthesis; L-histidine biosynthesis; L-histidine from 5-phospho-alpha-D-ribose 1-diphosphate: step 1/9. With respect to regulation, feedback inhibited by histidine. Functionally, catalyzes the condensation of ATP and 5-phosphoribose 1-diphosphate to form N'-(5'-phosphoribosyl)-ATP (PR-ATP). Has a crucial role in the pathway because the rate of histidine biosynthesis seems to be controlled primarily by regulation of HisG enzymatic activity. The polypeptide is ATP phosphoribosyltransferase (Parabacteroides distasonis (strain ATCC 8503 / DSM 20701 / CIP 104284 / JCM 5825 / NCTC 11152)).